The sequence spans 139 residues: Large ribosomal subunit protein uL16 (139 aa).

A compositionally biased stretch (basic residues) spans 1–17; it reads MLMPKRVKYRKSQRGRM. A disordered region spans residues 1–24; it reads MLMPKRVKYRKSQRGRMKGNSGRG.

It belongs to the universal ribosomal protein uL16 family. In terms of assembly, part of the 50S ribosomal subunit.

Binds 23S rRNA and is also seen to make contacts with the A and possibly P site tRNAs. In Chlorobium limicola (strain DSM 245 / NBRC 103803 / 6330), this protein is Large ribosomal subunit protein uL16.